A 279-amino-acid chain; its full sequence is Shikimate dehydrogenase (NADP(+)) (279 aa).

Residues 19-21 and threonine 66 contribute to the shikimate site; that span reads SRS. The active-site Proton acceptor is the lysine 70. Shikimate is bound by residues asparagine 91 and aspartate 106. NADP(+) is bound by residues 129 to 133, 152 to 157, and isoleucine 218; these read GAGGA and NRTLER. Tyrosine 220 is a shikimate binding site. An NADP(+)-binding site is contributed by glycine 241.

The protein belongs to the shikimate dehydrogenase family. In terms of assembly, homodimer.

The catalysed reaction is shikimate + NADP(+) = 3-dehydroshikimate + NADPH + H(+). It functions in the pathway metabolic intermediate biosynthesis; chorismate biosynthesis; chorismate from D-erythrose 4-phosphate and phosphoenolpyruvate: step 4/7. Its function is as follows. Involved in the biosynthesis of the chorismate, which leads to the biosynthesis of aromatic amino acids. Catalyzes the reversible NADPH linked reduction of 3-dehydroshikimate (DHSA) to yield shikimate (SA). This is Shikimate dehydrogenase (NADP(+)) from Gluconobacter oxydans (strain 621H) (Gluconobacter suboxydans).